Here is a 307-residue protein sequence, read N- to C-terminus: Putative F-box/LRR-repeat protein 22 (307 aa).

A compositionally biased stretch (polar residues) spans 1 to 15 (MVTSSSSPPLATSQL). The tract at residues 1–26 (MVTSSSSPPLATSQLPVMKGEEKPSN) is disordered. Residues 24–71 (PSNWAELPPDLLSSILLRLSPLEILENARKVCRSWRRVSKDPLIWRRI) enclose the F-box domain. 5 LRR repeats span residues 108-133 (WRFQTTSLLNYMAERSSNLRRLRVKG), 158-183 (YCSIEEEHFKTIGQACPNLKTLKLVG), 185-210 (WSHLNESDNDALAIADTMPGLLHLQL), 212-237 (SNGLTNIGLNAILDGCPHLECLDLRQ), and 244-270 (FGDLERQCLERIKDFRCPNDVLDDYNY). The span at 279–289 (IEDEKGEEEEN) shows a compositional bias: acidic residues. The tract at residues 279-307 (IEDEKGEEEENYSYGSDDTEYGYRRSADF) is disordered.

The chain is Putative F-box/LRR-repeat protein 22 (FBL22) from Arabidopsis thaliana (Mouse-ear cress).